Consider the following 431-residue polypeptide: MTVKTEAARDTLTYSRMRGMVAILIAFMKQRRMGLNDFIQKIANNSYACKHPEVQSILKISPPQEPELMNANPSPPPSPSQQINLGPSSNPHAKPSDFHFLKVIGKGSFGKVLLARHKAEEAFYAVKVLQKKAILKKKEEKHIMSERNVLLKNVKHPFLVGLHFSFQTADKLYFVLDYINGGELFYHLQRERCFLEPRARFYAAEIASALGYLHSLNIVYRDLKPENILLDSQGHIVLTDFGLCKENIEHNGTTSTFCGTPEYLAPEVLHKQPYDRTVDWWCLGAVLYEMLYGLPPFYSRNTAEMYDNILNKPLQLKPNITNSARHVLEGLLQKDRTKRLGAKDDFMEIKNHVFFSLINWEDLINKKITPPFNPNVSGPSDLRHFDPEFTEEPVPNSIGRSPDSLLLTASVKEAAEAFLGFSYAPPMDSFL.

Residues 1 to 60 are necessary for localization to the mitochondria; sequence MTVKTEAARDTLTYSRMRGMVAILIAFMKQRRMGLNDFIQKIANNSYACKHPEVQSILKI. The interval 64–92 is disordered; it reads QEPELMNANPSPPPSPSQQINLGPSSNPH. Serine 74 carries the post-translational modification Phosphoserine. Serine 78 is subject to Phosphoserine; by MAPK7. Positions 81–91 are enriched in polar residues; that stretch reads QQINLGPSSNP. The Protein kinase domain maps to 98–355; the sequence is FHFLKVIGKG…FMEIKNHVFF (258 aa). Residues 104 to 112 and lysine 127 contribute to the ATP site; that span reads IGKGSFGKV. Residues 131-141 carry the Nuclear localization signal motif; the sequence is KKAILKKKEEK. Catalysis depends on aspartate 222, which acts as the Proton acceptor. Threonine 256 carries the phosphothreonine; by PDPK1 modification. Residues 356 to 431 form the AGC-kinase C-terminal domain; sequence SLINWEDLIN…SYAPPMDSFL (76 aa). Threonine 369 bears the Phosphothreonine; by PKA mark. Serine 397, serine 401, and serine 422 each carry phosphoserine.

Belongs to the protein kinase superfamily. AGC Ser/Thr protein kinase family. In terms of assembly, homodimer; disulfide-linked. Forms a trimeric complex with FBXW7 and NOTCH1. Interacts with MAPK3/ERK1, MAPK1/ERK2, MAP2K1/MEK1, MAP2K2/MEK2, NEDD4, NEDD4L, MAPT/TAU, MAPK7, CREB1, SLC9A3R2/NHERF2 and KCNJ1/ROMK1. Associates with the mammalian target of rapamycin complex 2 (mTORC2) via an interaction with MAPKAP1/SIN1. Post-translationally, regulated by phosphorylation. Activated by phosphorylation on Ser-422 by mTORC2, transforming it into a substrate for PDPK1 which phosphorylates it on Thr-256. Phosphorylation on Ser-397 and Ser-401 are also essential for its activity. Phosphorylation on Ser-78 by MAPK7 is required for growth factor-induced cell cycle progression. In terms of processing, ubiquitinated by NEDD4L; which promotes proteasomal degradation. Ubiquitinated by SYVN1 at the endoplasmic reticulum; which promotes rapid proteasomal degradation and maintains a high turnover rate in resting cells.

Its subcellular location is the cytoplasm. It is found in the nucleus. The protein localises to the endoplasmic reticulum membrane. It localises to the cell membrane. The protein resides in the mitochondrion. It catalyses the reaction L-seryl-[protein] + ATP = O-phospho-L-seryl-[protein] + ADP + H(+). It carries out the reaction L-threonyl-[protein] + ATP = O-phospho-L-threonyl-[protein] + ADP + H(+). With respect to regulation, two specific sites, one in the kinase domain (Thr-256) and the other in the C-terminal regulatory region (Ser-422), need to be phosphorylated for its full activation. Phosphorylation at Ser-397 and Ser-401 are also essential for its activity. Activated by WNK1, WNK2, WNK3 and WNK4; which promote phosphorylation by mTORC2. Serine/threonine-protein kinase which is involved in the regulation of a wide variety of ion channels, membrane transporters, cellular enzymes, transcription factors, neuronal excitability, cell growth, proliferation, survival, migration and apoptosis. Plays an important role in cellular stress response. Contributes to regulation of renal Na(+) retention, renal K(+) elimination, salt appetite, gastric acid secretion, intestinal Na(+)/H(+) exchange and nutrient transport, insulin-dependent salt sensitivity of blood pressure, salt sensitivity of peripheral glucose uptake, cardiac repolarization and memory consolidation. Up-regulates Na(+) channels: SCNN1A/ENAC, SCN5A and ASIC1/ACCN2, K(+) channels: KCNJ1/ROMK1, KCNA1-5, KCNQ1-5 and KCNE1, epithelial Ca(2+) channels: TRPV5 and TRPV6, chloride channels: BSND, CLCN2 and CFTR, glutamate transporters: SLC1A3/EAAT1, SLC1A2 /EAAT2, SLC1A1/EAAT3, SLC1A6/EAAT4 and SLC1A7/EAAT5, amino acid transporters: SLC1A5/ASCT2, SLC38A1/SN1 and SLC6A19, creatine transporter: SLC6A8, Na(+)/dicarboxylate cotransporter: SLC13A2/NADC1, Na(+)-dependent phosphate cotransporter: SLC34A2/NAPI-2B, glutamate receptor: GRIK2/GLUR6. Up-regulates carriers: SLC9A3/NHE3, SLC12A1/NKCC2, SLC12A3/NCC, SLC5A3/SMIT, SLC2A1/GLUT1, SLC5A1/SGLT1 and SLC15A2/PEPT2. Regulates enzymes: GSK3A/B, PMM2 and Na(+)/K(+) ATPase, and transcription factors: CTNNB1 and nuclear factor NF-kappa-B. Stimulates sodium transport into epithelial cells by enhancing the stability and expression of SCNN1A/ENAC. This is achieved by phosphorylating the NEDD4L ubiquitin E3 ligase, promoting its interaction with 14-3-3 proteins, thereby preventing it from binding to SCNN1A/ENAC and targeting it for degradation. Regulates store-operated Ca(+2) entry (SOCE) by stimulating ORAI1 and STIM1. Regulates KCNJ1/ROMK1 directly via its phosphorylation or indirectly via increased interaction with SLC9A3R2/NHERF2. Phosphorylates MDM2 and activates MDM2-dependent ubiquitination of p53/TP53. Phosphorylates MAPT/TAU and mediates microtubule depolymerization and neurite formation in hippocampal neurons. Phosphorylates SLC2A4/GLUT4 and up-regulates its activity. Phosphorylates APBB1/FE65 and promotes its localization to the nucleus. Phosphorylates MAPK1/ERK2 and activates it by enhancing its interaction with MAP2K1/MEK1 and MAP2K2/MEK2. Phosphorylates FBXW7 and plays an inhibitory role in the NOTCH1 signaling. Phosphorylates FOXO1 resulting in its relocalization from the nucleus to the cytoplasm. Phosphorylates FOXO3, promoting its exit from the nucleus and interference with FOXO3-dependent transcription. Phosphorylates BRAF and MAP3K3/MEKK3 and inhibits their activity. Phosphorylates SLC9A3/NHE3 in response to dexamethasone, resulting in its activation and increased localization at the cell membrane. Phosphorylates CREB1. Necessary for vascular remodeling during angiogenesis. The protein is Serine/threonine-protein kinase Sgk1 (SGK1) of Bos taurus (Bovine).